We begin with the raw amino-acid sequence, 43 residues long: Protein PsbN (43 aa).

A helical transmembrane segment spans residues 5–27 (TLVTISISCLLVSFTGYALYTAF).

This sequence belongs to the PsbN family.

The protein localises to the plastid. It localises to the chloroplast thylakoid membrane. Functionally, may play a role in photosystem I and II biogenesis. The sequence is that of Protein PsbN from Pinus koraiensis (Korean pine).